The primary structure comprises 335 residues: Tetraacyldisaccharide 4'-kinase (335 aa).

Residue 58–65 (TVGGNGKT) coordinates ATP.

Belongs to the LpxK family.

The catalysed reaction is a lipid A disaccharide + ATP = a lipid IVA + ADP + H(+). The protein operates within glycolipid biosynthesis; lipid IV(A) biosynthesis; lipid IV(A) from (3R)-3-hydroxytetradecanoyl-[acyl-carrier-protein] and UDP-N-acetyl-alpha-D-glucosamine: step 6/6. Its function is as follows. Transfers the gamma-phosphate of ATP to the 4'-position of a tetraacyldisaccharide 1-phosphate intermediate (termed DS-1-P) to form tetraacyldisaccharide 1,4'-bis-phosphate (lipid IVA). This chain is Tetraacyldisaccharide 4'-kinase, found in Dichelobacter nodosus (strain VCS1703A).